A 321-amino-acid polypeptide reads, in one-letter code: Ribosomal RNA small subunit methyltransferase H (321 aa).

Residues G40–H42, D60, F84, D106, and Q113 each bind S-adenosyl-L-methionine.

Belongs to the methyltransferase superfamily. RsmH family.

It localises to the cytoplasm. It carries out the reaction cytidine(1402) in 16S rRNA + S-adenosyl-L-methionine = N(4)-methylcytidine(1402) in 16S rRNA + S-adenosyl-L-homocysteine + H(+). In terms of biological role, specifically methylates the N4 position of cytidine in position 1402 (C1402) of 16S rRNA. The protein is Ribosomal RNA small subunit methyltransferase H of Haemophilus influenzae (strain PittEE).